The primary structure comprises 546 residues: Chaperonin GroEL (546 aa).

Residues 30–33, K51, 87–91, G415, and D495 each bind ATP; these read TLGP and DGTTT.

This sequence belongs to the chaperonin (HSP60) family. Forms a cylinder of 14 subunits composed of two heptameric rings stacked back-to-back. Interacts with the co-chaperonin GroES.

The protein localises to the cytoplasm. It catalyses the reaction ATP + H2O + a folded polypeptide = ADP + phosphate + an unfolded polypeptide.. In terms of biological role, together with its co-chaperonin GroES, plays an essential role in assisting protein folding. The GroEL-GroES system forms a nano-cage that allows encapsulation of the non-native substrate proteins and provides a physical environment optimized to promote and accelerate protein folding. The sequence is that of Chaperonin GroEL from Brucella ovis (strain ATCC 25840 / 63/290 / NCTC 10512).